Here is a 341-residue protein sequence, read N- to C-terminus: HTH-type transcriptional repressor PurR (341 aa).

In terms of domain architecture, HTH lacI-type spans 2-56; it reads ATIKDVAKHAGVSTTTVSHVINKTRFVAENTKAAVWAAIKELHYSPSAVARSLKV. The segment at residues 4 to 23 is a DNA-binding region (H-T-H motif); it reads IKDVAKHAGVSTTTVSHVIN. Residues 48–56 mediate DNA binding; that stretch reads SAVARSLKV. 5 residues coordinate hypoxanthine: Tyr73, Arg190, Thr192, Phe221, and Asp275.

Homodimer.

The protein operates within purine metabolism; purine nucleotide biosynthesis [regulation]. Is the main repressor of the genes involved in the de novo synthesis of purine nucleotides, regulating purB, purC, purEK, purF, purHD, purL, purMN and guaBA expression. PurR is allosterically activated to bind its cognate DNA by binding the purine corepressors, hypoxanthine or guanine, thereby effecting transcription repression. The sequence is that of HTH-type transcriptional repressor PurR from Yersinia pseudotuberculosis serotype O:1b (strain IP 31758).